The chain runs to 192 residues: FMN-dependent NADH:quinone oxidoreductase 1 (192 aa).

Residues Ser-9 and 15 to 17 (SYS) each bind FMN.

The protein belongs to the azoreductase type 1 family. Homodimer. FMN is required as a cofactor.

The enzyme catalyses 2 a quinone + NADH + H(+) = 2 a 1,4-benzosemiquinone + NAD(+). It carries out the reaction N,N-dimethyl-1,4-phenylenediamine + anthranilate + 2 NAD(+) = 2-(4-dimethylaminophenyl)diazenylbenzoate + 2 NADH + 2 H(+). Quinone reductase that provides resistance to thiol-specific stress caused by electrophilic quinones. Its function is as follows. Also exhibits azoreductase activity. Catalyzes the reductive cleavage of the azo bond in aromatic azo compounds to the corresponding amines. The sequence is that of FMN-dependent NADH:quinone oxidoreductase 1 from Colwellia psychrerythraea (strain 34H / ATCC BAA-681) (Vibrio psychroerythus).